The primary structure comprises 299 residues: Taste receptor type 2 member 42 (299 aa).

Residues 1 to 7 (MATELDK) are Extracellular-facing. Residues 8 to 28 (IFLILAIAEFIISMLGNVFIG) traverse the membrane as a helical segment. The Cytoplasmic segment spans residues 29-50 (LVNCSEGIKNQKVFSSDFILTS). A helical membrane pass occupies residues 51 to 71 (LAISTIGQLLVILFDSFLVGL). The Extracellular segment spans residues 72-101 (ASHLYTTYRLGKPVIMLWHMTNHLTTWLAT). Residues 102–122 (CLSVFYFFKIAHFPHSLFLWL) traverse the membrane as a helical segment. At 123 to 127 (RWRMN) the chain is on the cytoplasmic side. Residues 128 to 148 (GMIAMLLILSLFLLIFDSSVL) form a helical membrane-spanning segment. The Extracellular segment spans residues 149–187 (EIFIDISLNIIDKSSLTLYLDESKTLYDKLSILKTLLSL). The chain crosses the membrane as a helical span at residues 188–208 (TSFIPFSLSLTSVLFLYLSLV). The Cytoplasmic portion of the chain corresponds to 209–238 (RHTRNLKLSSLGSRDSSTEAHRRAMKMVMS). The helical transmembrane segment at 239–259 (FLFLFIVHFFSLQVANWIFFM) threads the bilayer. Over 260–265 (LWNNKY) the chain is Extracellular. Residues 266 to 286 (IKFVMLALNAFPSCHSFILIL) form a helical membrane-spanning segment. The Cytoplasmic segment spans residues 287-299 (GNSKLRQTAVRLL).

It belongs to the G-protein coupled receptor T2R family.

The protein resides in the membrane. Functionally, receptor that may play a role in the perception of bitterness and is gustducin-linked. May play a role in sensing the chemical composition of the gastrointestinal content. The activity of this receptor may stimulate alpha gustducin, mediate PLC-beta-2 activation and lead to the gating of TRPM5. This is Taste receptor type 2 member 42 (TAS2R42) from Gorilla gorilla gorilla (Western lowland gorilla).